Consider the following 173-residue polypeptide: Large ribosomal subunit protein uL16 (173 aa).

Belongs to the universal ribosomal protein uL16 family.

The polypeptide is Large ribosomal subunit protein uL16 (Methanococcus maripaludis (strain C6 / ATCC BAA-1332)).